Consider the following 271-residue polypeptide: Mannosyl-3-phosphoglycerate phosphatase (271 aa).

The Nucleophile role is filled by D13. D13, D15, and D214 together coordinate Mg(2+).

It belongs to the HAD-like hydrolase superfamily. MPGP family. Mg(2+) serves as cofactor.

It localises to the cytoplasm. The catalysed reaction is 2-O-(alpha-D-mannosyl)-3-phosphoglycerate + H2O = (2R)-2-O-(alpha-D-mannosyl)-glycerate + phosphate. This Escherichia coli O45:K1 (strain S88 / ExPEC) protein is Mannosyl-3-phosphoglycerate phosphatase.